The chain runs to 134 residues: L-ectoine synthase (134 aa).

Belongs to the ectoine synthase family.

The enzyme catalyses (2S)-4-acetamido-2-aminobutanoate = L-ectoine + H2O. It functions in the pathway amine and polyamine biosynthesis; ectoine biosynthesis; L-ectoine from L-aspartate 4-semialdehyde: step 3/3. Functionally, catalyzes the circularization of gamma-N-acetyl-alpha,gamma-diaminobutyric acid (ADABA) to ectoine (1,4,5,6-tetrahydro-2-methyl-4-pyrimidine carboxylic acid), which is an excellent osmoprotectant. This Shouchella clausii (strain KSM-K16) (Alkalihalobacillus clausii) protein is L-ectoine synthase.